Reading from the N-terminus, the 358-residue chain is Histidinol-phosphate aminotransferase (358 aa).

Lysine 218 bears the N6-(pyridoxal phosphate)lysine mark.

It belongs to the class-II pyridoxal-phosphate-dependent aminotransferase family. Histidinol-phosphate aminotransferase subfamily. Homodimer. Pyridoxal 5'-phosphate serves as cofactor.

It carries out the reaction L-histidinol phosphate + 2-oxoglutarate = 3-(imidazol-4-yl)-2-oxopropyl phosphate + L-glutamate. It functions in the pathway amino-acid biosynthesis; L-histidine biosynthesis; L-histidine from 5-phospho-alpha-D-ribose 1-diphosphate: step 7/9. This chain is Histidinol-phosphate aminotransferase, found in Dehalococcoides mccartyi (strain ATCC BAA-2266 / KCTC 15142 / 195) (Dehalococcoides ethenogenes (strain 195)).